The sequence spans 410 residues: LL-diaminopimelate aminotransferase (410 aa).

Substrate is bound by residues tyrosine 15 and glycine 42. Pyridoxal 5'-phosphate-binding positions include tyrosine 72, 108–109, tyrosine 132, asparagine 187, tyrosine 218, and 246–248; these read SK and SFS. The substrate site is built by lysine 109, tyrosine 132, and asparagine 187. Lysine 249 bears the N6-(pyridoxal phosphate)lysine mark. Arginine 257 and asparagine 292 together coordinate pyridoxal 5'-phosphate. Asparagine 292 and arginine 388 together coordinate substrate.

Belongs to the class-I pyridoxal-phosphate-dependent aminotransferase family. LL-diaminopimelate aminotransferase subfamily. Homodimer. Pyridoxal 5'-phosphate serves as cofactor.

It carries out the reaction (2S,6S)-2,6-diaminopimelate + 2-oxoglutarate = (S)-2,3,4,5-tetrahydrodipicolinate + L-glutamate + H2O + H(+). It functions in the pathway amino-acid biosynthesis; L-lysine biosynthesis via DAP pathway; LL-2,6-diaminopimelate from (S)-tetrahydrodipicolinate (aminotransferase route): step 1/1. Involved in the synthesis of meso-diaminopimelate (m-DAP or DL-DAP), required for both lysine and peptidoglycan biosynthesis. Catalyzes the direct conversion of tetrahydrodipicolinate to LL-diaminopimelate. The protein is LL-diaminopimelate aminotransferase of Geotalea uraniireducens (strain Rf4) (Geobacter uraniireducens).